A 166-amino-acid chain; its full sequence is uncharacterized protein (166 aa).

The segment at 1–58 (MSSEITEGDLQKFHDEHFNAKAVNLWNVAFAQNDRGGNSESANVEYTQSVERYPDGTI) is may interact with smn1.

In terms of assembly, part of the core SMN complex at least composed of smn1, yip11/gem2, gem6, gem7 and gem8. Interacts with smn1; the interaction is direct. Interacts with gem7; the interaction is direct.

The protein localises to the cytoplasm. It localises to the nucleus. The SMN complex catalyzes the assembly of small nuclear ribonucleoproteins (snRNPs), the building blocks of the spliceosome, and thereby plays an important role in the splicing of cellular pre-mRNAs. Most spliceosomal snRNPs contain a common set of Sm proteins SNRPB, SNRPD1, SNRPD2, SNRPD3, SNRPE, SNRPF and SNRPG that assemble in a heptameric protein ring on the Sm site of the small nuclear RNA to form the core snRNP (Sm core). In the cytosol, the Sm proteins SNRPD1, SNRPD2, SNRPE, SNRPF and SNRPG are trapped in an inactive 6S pICln-Sm complex by the chaperone CLNS1A that controls the assembly of the core snRNP. To assemble core snRNPs, the SMN complex accepts the trapped 5Sm proteins from CLNS1A forming an intermediate. Binding of snRNA inside 5Sm triggers eviction of the SMN complex, thereby allowing binding of SNRPD3 and SNRPB to complete assembly of the core snRNP. This is an uncharacterized protein from Schizosaccharomyces pombe (strain 972 / ATCC 24843) (Fission yeast).